The primary structure comprises 142 residues: MQQFNFFMNDVVQEARNDMVHAGYTELKTAEEVEEVLTQKGTTLVMVNSVCGCAGGIARPAAAYMKNYETQPDRFVTVFAGQDKEATARAREFFTGYGPSSPSFALLKDGQIQTMVERHEIEGHEPIEVVQKLEQAVDTYCK.

Belongs to the bacilliredoxin family.

The chain is Bacilliredoxin ABC2448 from Shouchella clausii (strain KSM-K16) (Alkalihalobacillus clausii).